We begin with the raw amino-acid sequence, 521 residues long: Cysteine protease atg-4.2 (521 aa).

The segment covering 90–100 has biased composition (low complexity); the sequence is MMGSIRPSSSS. Positions 90-109 are disordered; that stretch reads MMGSIRPSSSSQDVHSTGEI. The active-site Nucleophile is Cys-203. Residues Asp-394 and His-396 contribute to the active site. Residues 499–521 are disordered; that stretch reads PSYEREVSETEQAQADKHGFEML.

This sequence belongs to the peptidase C54 family.

It localises to the cytoplasm. The enzyme catalyses [protein]-C-terminal L-amino acid-glycyl-phosphatidylethanolamide + H2O = [protein]-C-terminal L-amino acid-glycine + a 1,2-diacyl-sn-glycero-3-phosphoethanolamine. Cysteine protease required for autophagy. Cleaves the C-terminal amino acid of ATG8 family proteins lgg-1, to reveal a C-terminal glycine. Exposure of the glycine at the C-terminus is essential for ATG8 proteins conjugation to phosphatidylethanolamine (PE) and insertion to membranes, which is necessary for autophagy. Its cleavage activity is functionally redundant to atg-4.1, but it cleaves lgg-1 precursors less efficiently than atg-4.1. In contrast to atg-4.1, plays a more significant role in the later phases of autophagy and in addition has a role in autophagosome maturation. Acts redundantly with atg-4.1 to promote the lgg-1 delipidation to release the protein from membranes, which facilitates multiple events during macroautophagy. Regulates the accumulation of autophagic structures in neurons and is specifically, required for the maturation and elimination of autophagosomes from the synaptic region of AIY interneurons. The protein is Cysteine protease atg-4.2 of Caenorhabditis elegans.